A 310-amino-acid chain; its full sequence is Probable mitochondrial import receptor subunit TOM40-2 (310 aa).

Position 1 is an N-acetylmethionine (methionine 1).

This sequence belongs to the Tom40 family. Forms part of the preprotein translocase complex of the outer mitochondrial membrane (TOM complex) which consists of at least 6 different proteins (TOM5, TOM6, TOM7, TOM20, TOM22/TOM9 and TOM40). Present in a large lipid-enriched complex called mitochondrial transmembrane lipoprotein (MTL) complex made of proteins located in the two mitochondrial membranes, including the TOM complex and the core components of the MICOS complex and containing at least digalactosyldiacylglycerol (DGDG). Binds to MIC60. Component of a mitochondrial large protein complex that contains, at least, MIC60, DGS1, TOM40, TOM20 proteins, and petC/RISP. Expressed in roots, flowers, young cotyledons and leaves.

It localises to the mitochondrion outer membrane. Functionally, central component of the receptor complex responsible for the recognition and translocation of cytosolically synthesized mitochondrial preproteins. Together with TOM22 functions as the transit peptide receptor at the surface of the mitochondrion outer membrane and facilitates the movement of preproteins into the translocation pore. Directly involved in the pore formation. The sequence is that of Probable mitochondrial import receptor subunit TOM40-2 from Arabidopsis thaliana (Mouse-ear cress).